The chain runs to 162 residues: Shikimate kinase (162 aa).

10-15 (GAGKST) serves as a coordination point for ATP. Serine 14 provides a ligand contact to Mg(2+). Substrate contacts are provided by aspartate 28, arginine 52, and glycine 73. ATP is bound at residue arginine 113. Substrate is bound at residue arginine 129.

The protein belongs to the shikimate kinase family. In terms of assembly, monomer. It depends on Mg(2+) as a cofactor.

Its subcellular location is the cytoplasm. It catalyses the reaction shikimate + ATP = 3-phosphoshikimate + ADP + H(+). The protein operates within metabolic intermediate biosynthesis; chorismate biosynthesis; chorismate from D-erythrose 4-phosphate and phosphoenolpyruvate: step 5/7. Its function is as follows. Catalyzes the specific phosphorylation of the 3-hydroxyl group of shikimic acid using ATP as a cosubstrate. This chain is Shikimate kinase, found in Lactococcus lactis subsp. cremoris (strain SK11).